The primary structure comprises 157 residues: Small ribosomal subunit protein uS7 (157 aa).

This sequence belongs to the universal ribosomal protein uS7 family. As to quaternary structure, part of the 30S ribosomal subunit. Contacts proteins S9 and S11.

Its function is as follows. One of the primary rRNA binding proteins, it binds directly to 16S rRNA where it nucleates assembly of the head domain of the 30S subunit. Is located at the subunit interface close to the decoding center, probably blocks exit of the E-site tRNA. The polypeptide is Small ribosomal subunit protein uS7 (Caulobacter vibrioides (strain ATCC 19089 / CIP 103742 / CB 15) (Caulobacter crescentus)).